Reading from the N-terminus, the 264-residue chain is Acyl-[acyl-carrier-protein]--UDP-N-acetylglucosamine O-acyltransferase (264 aa).

The protein belongs to the transferase hexapeptide repeat family. LpxA subfamily. Homotrimer.

It localises to the cytoplasm. It catalyses the reaction a (3R)-hydroxyacyl-[ACP] + UDP-N-acetyl-alpha-D-glucosamine = a UDP-3-O-[(3R)-3-hydroxyacyl]-N-acetyl-alpha-D-glucosamine + holo-[ACP]. Its pathway is glycolipid biosynthesis; lipid IV(A) biosynthesis; lipid IV(A) from (3R)-3-hydroxytetradecanoyl-[acyl-carrier-protein] and UDP-N-acetyl-alpha-D-glucosamine: step 1/6. Functionally, involved in the biosynthesis of lipid A, a phosphorylated glycolipid that anchors the lipopolysaccharide to the outer membrane of the cell. This Rickettsia conorii (strain ATCC VR-613 / Malish 7) protein is Acyl-[acyl-carrier-protein]--UDP-N-acetylglucosamine O-acyltransferase.